The sequence spans 58 residues: uncharacterized protein (58 aa).

It to A.fulgidus AF2407.1.

This is an uncharacterized protein from Pyrococcus abyssi (strain GE5 / Orsay).